We begin with the raw amino-acid sequence, 398 residues long: Serpin-Z2B (398 aa).

Residues 343-367 (GTEAAATTIAKVVLRQAPPPSVLDF) form an RCL region.

Belongs to the serpin family.

In terms of biological role, inhibits chymotrypsin, cathepsin G and trypsin in vitro. This chain is Serpin-Z2B, found in Triticum aestivum (Wheat).